The chain runs to 199 residues: Photosystem I reaction center subunit XI (199 aa).

2 helical membrane passes run Leu-108–Leu-128 and Phe-165–Leu-185.

The protein belongs to the PsaL family.

The protein resides in the cellular thylakoid membrane. The sequence is that of Photosystem I reaction center subunit XI from Prochlorococcus marinus (strain MIT 9301).